Consider the following 127-residue polypeptide: NADPH-dependent 7-cyano-7-deazaguanine reductase (127 aa).

Cysteine 40 serves as the catalytic Thioimide intermediate. Aspartate 47 acts as the Proton donor in catalysis. Residues 62 to 64 (VEL) and 81 to 82 (HE) each bind substrate.

The protein belongs to the GTP cyclohydrolase I family. QueF type 1 subfamily.

It is found in the cytoplasm. The catalysed reaction is 7-aminomethyl-7-carbaguanine + 2 NADP(+) = 7-cyano-7-deazaguanine + 2 NADPH + 3 H(+). It functions in the pathway tRNA modification; tRNA-queuosine biosynthesis. Functionally, catalyzes the NADPH-dependent reduction of 7-cyano-7-deazaguanine (preQ0) to 7-aminomethyl-7-deazaguanine (preQ1). This Campylobacter jejuni (strain RM1221) protein is NADPH-dependent 7-cyano-7-deazaguanine reductase.